Reading from the N-terminus, the 474-residue chain is Methylenetetrahydrofolate--tRNA-(uracil-5-)-methyltransferase TrmFO (474 aa).

An FAD-binding site is contributed by Gly-9–Gly-14.

This sequence belongs to the MnmG family. TrmFO subfamily. It depends on FAD as a cofactor.

The protein resides in the cytoplasm. It carries out the reaction uridine(54) in tRNA + (6R)-5,10-methylene-5,6,7,8-tetrahydrofolate + NADH + H(+) = 5-methyluridine(54) in tRNA + (6S)-5,6,7,8-tetrahydrofolate + NAD(+). The catalysed reaction is uridine(54) in tRNA + (6R)-5,10-methylene-5,6,7,8-tetrahydrofolate + NADPH + H(+) = 5-methyluridine(54) in tRNA + (6S)-5,6,7,8-tetrahydrofolate + NADP(+). Catalyzes the folate-dependent formation of 5-methyl-uridine at position 54 (M-5-U54) in all tRNAs. The sequence is that of Methylenetetrahydrofolate--tRNA-(uracil-5-)-methyltransferase TrmFO from Methylorubrum extorquens (strain PA1) (Methylobacterium extorquens).